The following is a 139-amino-acid chain: Large ribosomal subunit protein uL16 (139 aa).

It belongs to the universal ribosomal protein uL16 family. As to quaternary structure, part of the 50S ribosomal subunit.

Its function is as follows. Binds 23S rRNA and is also seen to make contacts with the A and possibly P site tRNAs. This chain is Large ribosomal subunit protein uL16, found in Gloeothece citriformis (strain PCC 7424) (Cyanothece sp. (strain PCC 7424)).